The sequence spans 193 residues: Protein PATRONUS 1 (193 aa).

Residues 14-16 (DEN) carry the DEN-box motif. The short motif at 46–49 (RKAL) is the D-box element.

As to quaternary structure, interacts directly with the anaphase promoting complex/cyclosome (APC/C) through the CDC27B and CDC20-1 subunits. Expressed in somatic and reproductive tissues. Expressed in inflorescence, young buds, roots and basal portion of young leaves. Expressed in proliferating cells such as apical meristems of roots and shoots, expanding cotyledons and leaves, root vascular tissues, and in stomatal precursor cells.

It is found in the nucleus. It localises to the cytoplasm. Functionally, required for the maintenance of centromeric cohesion during interkinesis, until meiosis II. Required for regular configuration and segregation of sister chromatids in meiosis II. Also required for centromere cohesion during meiosis I. Involved in spindle organization at the end of telophase I and in meiosis II. Required to prevent precocious release of pericentromeric cohesins during meiosis, but not for cohesion establishment and monopolar orientation of kinetochores at meiosis I. Involved also in somatic development. Regulates mitotic cell division and ploidy stability in somatic cell types. May be involved in the organization of microtubules dynamics. Involved in abiotic stresses and mono- or divalent ions tolerance and may play a role in maintaining meristematic activity under saline conditions. PANS1 and GIG1 are part of a network linking centromere cohesion and cell cycle progression through control of APC/C activity. Regulates the number of dividing cells in root meristem and is necessary for the anaphase onset control through an APC/C-mediated pathway. Involved in maintaining correct chromosome arm cohesion under stress conditions. In Arabidopsis thaliana (Mouse-ear cress), this protein is Protein PATRONUS 1.